The primary structure comprises 470 residues: Tert-butanol monooxygenase / tert-amyl alcohol desaturase oxygenase subunit (470 aa).

The Rieske domain maps to 51 to 155 (WQPVCLSQEL…AFERNGLVFA (105 aa)). [2Fe-2S] cluster-binding residues include cysteine 91, histidine 93, cysteine 110, and histidine 113.

It belongs to the bacterial ring-hydroxylating dioxygenase alpha subunit family. In terms of assembly, this two-component enzyme is composed of an oxygenase (MdpJ) and a reductase (MdpK). It depends on [2Fe-2S] cluster as a cofactor.

It carries out the reaction tert-butanol + NADPH + O2 + H(+) = 2-methylpropane-1,2-diol + NADP(+) + H2O. The enzyme catalyses 2-methylbutan-2-ol + NADPH + O2 + H(+) = 3-hydroxy-3-methylbut-1-ene + NADP(+) + 2 H2O. Functionally, oxygenase component of a two-component system involved in the degradation of tertiary alcohols such as tert-butyl alcohol (TBA) and tert-amyl alcohol (TAA). In the presence of TBA, catalyzes the hydroxylation of TBA to 2-methylpropane-1,2-diol. In the presence of TAA, functions as a desaturase, enabling the degradation of TAA and resulting in the formation of the hemiterpene 3-hydroxy-3-methylbut-1-ene. The specificity of the catalysis depends strongly on the molecule structure of the substrate, allowing either hydroxylation or desaturation reactions. Also catalyzes the desaturation of the tertiary alcohol 3-methyl-3-pentanol (a C6 homolog of TBA and TAA) to 3-methyl-1-penten-3-ol, with lower efficiency. In addition, can transform some secondary alcohols, including the hydroxylation of 2-propanol to 1,2-propanediol, and the desaturation of 2-butanol, 3-methyl-2-butanol and 3-pentanol. This Aquincola tertiaricarbonis protein is Tert-butanol monooxygenase / tert-amyl alcohol desaturase oxygenase subunit.